Here is a 232-residue protein sequence, read N- to C-terminus: MQCIKCIEINLLQKKLGYFFHTVDLLLRALTHRSFSNKHNERLEFLGDSILNYSITNILYHRYNHMDEGDMSRIRSSLVCSRTLVELAKEFKLGNCLKLGQGELKNKGYNRESILADTVEAIIGGIFLDSNIKTIEMLIAFWYQFRLNKIDLEDKQKDPKTRLQEYLQHHHLPLPIYCINQVQGQAHDQIFIMNCQVSSLKYSVMGRGSSRRKAEQDAAENALKFLIEINND.

Residues 9-131 (INLLQKKLGY…IIGGIFLDSN (123 aa)) form the RNase III domain. Glu-44 contributes to the Mg(2+) binding site. Asp-48 is an active-site residue. Asp-117 and Glu-120 together coordinate Mg(2+). Residue Glu-120 is part of the active site. In terms of domain architecture, DRBM spans 158-228 (DPKTRLQEYL…AENALKFLIE (71 aa)).

Belongs to the ribonuclease III family. Homodimer. Mg(2+) serves as cofactor.

Its subcellular location is the cytoplasm. It carries out the reaction Endonucleolytic cleavage to 5'-phosphomonoester.. Digests double-stranded RNA. Involved in the processing of primary rRNA transcript to yield the immediate precursors to the large and small rRNAs (23S and 16S). Processes some mRNAs, and tRNAs when they are encoded in the rRNA operon. Processes pre-crRNA and tracrRNA of type II CRISPR loci if present in the organism. The polypeptide is Ribonuclease 3 (Blochmanniella floridana).